The following is an 804-amino-acid chain: Leucine--tRNA ligase (804 aa).

The short motif at 40–51 is the 'HIGH' region element; it reads PYPSGAGLHVGH. Residues 576-580 carry the 'KMSKS' region motif; it reads KMSKS. K579 lines the ATP pocket.

Belongs to the class-I aminoacyl-tRNA synthetase family.

The protein resides in the cytoplasm. The catalysed reaction is tRNA(Leu) + L-leucine + ATP = L-leucyl-tRNA(Leu) + AMP + diphosphate. This is Leucine--tRNA ligase from Bacillus subtilis (strain 168).